Reading from the N-terminus, the 152-residue chain is Xanthine-guanine phosphoribosyltransferase (152 aa).

Residues 37-38, Arg69, and 88-96 contribute to the 5-phospho-alpha-D-ribose 1-diphosphate site; these read RG and DDLVDTGGT. Arg69 is a binding site for GMP. Position 89 (Asp89) interacts with Mg(2+). 2 residues coordinate guanine: Asp92 and Ile135. Xanthine contacts are provided by Asp92 and Ile135. Residues 92–96 and 134–135 each bind GMP; these read DTGGT and WI.

Belongs to the purine/pyrimidine phosphoribosyltransferase family. XGPT subfamily. In terms of assembly, homotetramer. It depends on Mg(2+) as a cofactor.

It localises to the cell inner membrane. It carries out the reaction GMP + diphosphate = guanine + 5-phospho-alpha-D-ribose 1-diphosphate. It catalyses the reaction XMP + diphosphate = xanthine + 5-phospho-alpha-D-ribose 1-diphosphate. The enzyme catalyses IMP + diphosphate = hypoxanthine + 5-phospho-alpha-D-ribose 1-diphosphate. Its pathway is purine metabolism; GMP biosynthesis via salvage pathway; GMP from guanine: step 1/1. It functions in the pathway purine metabolism; XMP biosynthesis via salvage pathway; XMP from xanthine: step 1/1. In terms of biological role, purine salvage pathway enzyme that catalyzes the transfer of the ribosyl-5-phosphate group from 5-phospho-alpha-D-ribose 1-diphosphate (PRPP) to the N9 position of the 6-oxopurines guanine and xanthine to form the corresponding ribonucleotides GMP (guanosine 5'-monophosphate) and XMP (xanthosine 5'-monophosphate), with the release of PPi. To a lesser extent, also acts on hypoxanthine. The polypeptide is Xanthine-guanine phosphoribosyltransferase (Serratia proteamaculans (strain 568)).